Consider the following 341-residue polypeptide: L-threonine 3-dehydrogenase (341 aa).

A Zn(2+)-binding site is contributed by Cys38. Active-site charge relay system residues include Thr40 and His43. 6 residues coordinate Zn(2+): His63, Glu64, Cys93, Cys96, Cys99, and Cys107. Residues Ile175, Asp195, Arg200, Leu262–Ile264, and Ile286–Tyr287 contribute to the NAD(+) site.

The protein belongs to the zinc-containing alcohol dehydrogenase family. As to quaternary structure, homotetramer. Zn(2+) is required as a cofactor.

Its subcellular location is the cytoplasm. It carries out the reaction L-threonine + NAD(+) = (2S)-2-amino-3-oxobutanoate + NADH + H(+). Its pathway is amino-acid degradation; L-threonine degradation via oxydo-reductase pathway; glycine from L-threonine: step 1/2. Catalyzes the NAD(+)-dependent oxidation of L-threonine to 2-amino-3-ketobutyrate. The chain is L-threonine 3-dehydrogenase from Shewanella sp. (strain ANA-3).